The primary structure comprises 269 residues: Peptide deformylase 1A, chloroplastic/mitochondrial (269 aa).

Residues 1 to 60 constitute a chloroplast and mitochondrion transit peptide; it reads MGLHRDEATAMETLFRVSLRLLPVSAAVTCRSIRFPVSRPGSSHLLNRKLYNLPTSSSSS. Residues 123-126 and Gly187 each bind substrate; that span reads PGVG. Residue Cys188 coordinates Zn(2+). A dimerization region spans residues 191–196; sequence VDGFRA. His230 contacts Zn(2+). Residue Glu231 is part of the active site. His234 serves as a coordination point for Zn(2+). The dimerization stretch occupies residues 236–254; sequence DGNLYVDKMVPRTFRTVDN.

Belongs to the polypeptide deformylase family. Homodimer. Zn(2+) is required as a cofactor. As to expression, expressed in roots, leaves, flowers and siliques.

It is found in the plastid. It localises to the chloroplast stroma. The protein resides in the mitochondrion. The catalysed reaction is N-terminal N-formyl-L-methionyl-[peptide] + H2O = N-terminal L-methionyl-[peptide] + formate. Its activity is regulated as follows. Inhibited by actinonin. Functionally, removes the formyl group from the N-terminal Met of newly synthesized proteins. The chain is Peptide deformylase 1A, chloroplastic/mitochondrial (PDF1A) from Arabidopsis thaliana (Mouse-ear cress).